A 66-amino-acid polypeptide reads, in one-letter code: UPF0434 protein Mnod_1613 (66 aa).

This sequence belongs to the UPF0434 family.

The protein is UPF0434 protein Mnod_1613 of Methylobacterium nodulans (strain LMG 21967 / CNCM I-2342 / ORS 2060).